We begin with the raw amino-acid sequence, 264 residues long: 14-3-3 protein homolog (264 aa).

Low complexity predominate over residues 236-258; sequence SEAPAATEEQQQSSQAPAAQPTE. A disordered region spans residues 236 to 264; sequence SEAPAATEEQQQSSQAPAAQPTEGKADQE.

This sequence belongs to the 14-3-3 family.

The polypeptide is 14-3-3 protein homolog (BMH1) (Candida albicans (strain SC5314 / ATCC MYA-2876) (Yeast)).